Here is a 218-residue protein sequence, read N- to C-terminus: Dual specificity protein phosphatase TpbA (218 aa).

Positions 1–28 (MHRSPLAWLRLLLAAVLGAFLLGGPLHA) are cleaved as a signal peptide. The Tyrosine-protein phosphatase domain occupies 44 to 188 (DPSINLYRMS…YVRGADVDGL (145 aa)). Asp-105 (proton donor/acceptor) is an active-site residue. Cys-132 acts as the Phosphocysteine intermediate in catalysis.

It belongs to the protein-tyrosine phosphatase family. Monomer in solution.

The protein resides in the periplasm. It catalyses the reaction O-phospho-L-tyrosyl-[protein] + H2O = L-tyrosyl-[protein] + phosphate. The enzyme catalyses O-phospho-L-threonyl-[protein] + H2O = L-threonyl-[protein] + phosphate. The catalysed reaction is O-phospho-L-seryl-[protein] + H2O = L-seryl-[protein] + phosphate. With respect to regulation, the phosphatase activity is completely inhibited by trisodium orthovanadate, a tyrosine phosphatase specific inhibitor. Its function is as follows. Phosphatase that regulates diverse phenotypes in P.aeruginosa via regulation of the concentration of cellular c-di-GMP. Acts by dephosphorylating the membrane-anchored diguanylate cyclase TpbB at tyrosine and serine/threonine sites, leading to inactivation of TpbB and reduced c-di-GMP production. The reduced cellular c-di-GMP concentration leads to reduced adhesin expression, reduced extracellular polysaccharide (EPS) production, pellicule production, cell aggregation and biofilm formation, and enhanced swimming and swarming. It affects colony morphology and controls rugose colony formation. TpbA also acts as a positive regulator of extracellular DNA (eDNA, a major component of the biofilm matrix) and cell lysis by reducing c-di-GMP concentrations. In vitro shows phosphatase activity toward p-nitrophenyl phosphate (pNPP), tyrosine phosphopeptides and a threonine phosphopeptide. Does not have phosphodiesterases (PDE) activity, and cannot degrade c-di-GMP. In Pseudomonas aeruginosa (strain UCBPP-PA14), this protein is Dual specificity protein phosphatase TpbA.